The sequence spans 124 residues: Small ribosomal subunit protein uS12 (124 aa).

Position 89 is a 3-methylthioaspartic acid (D89).

The protein belongs to the universal ribosomal protein uS12 family. Part of the 30S ribosomal subunit. Contacts proteins S8 and S17. May interact with IF1 in the 30S initiation complex.

Functionally, with S4 and S5 plays an important role in translational accuracy. Its function is as follows. Interacts with and stabilizes bases of the 16S rRNA that are involved in tRNA selection in the A site and with the mRNA backbone. Located at the interface of the 30S and 50S subunits, it traverses the body of the 30S subunit contacting proteins on the other side and probably holding the rRNA structure together. The combined cluster of proteins S8, S12 and S17 appears to hold together the shoulder and platform of the 30S subunit. In Shewanella piezotolerans (strain WP3 / JCM 13877), this protein is Small ribosomal subunit protein uS12.